We begin with the raw amino-acid sequence, 35 residues long: MSDIN-like toxin proprotein 8 (35 aa).

The propeptide occupies 1–10; sequence MSDINATRLP. Residues 11–18 constitute a cross-link (cyclopeptide (Phe-Pro)); sequence FVFVASPP. Positions 19–35 are excised as a propeptide; that stretch reads CVGDDIAMVLTRGENLC.

The protein belongs to the MSDIN fungal toxin family. Processed by the macrocyclase-peptidase enzyme POPB to yield a toxic cyclic octapeptide. POPB first removes 10 residues from the N-terminus. Conformational trapping of the remaining peptide forces the enzyme to release this intermediate rather than proceed to macrocyclization. The enzyme rebinds the remaining peptide in a different conformation and catalyzes macrocyclization of the N-terminal 8 residues. In terms of tissue distribution, expressed in basidiocarps.

In terms of biological role, probable toxin that belongs to the MSDIN-like toxin family responsible for a large number of food poisoning cases and deaths. The sequence is that of MSDIN-like toxin proprotein 8 from Amanita exitialis (Guangzhou destroying angel).